We begin with the raw amino-acid sequence, 504 residues long: MSFSVDVLANIAIELQRGIGHQDRFQRLITTLRQVLECDASALLRYDSRQFIPLAIDGLAKGVLGRRFALEGHPRLEAIARAGDVVRFPADSELPDPYDGLIPGQESLKVHACVGLPLFAGQNLIGALTLDGMQPDQFDVFSDEELRLIAALAAGALSNALLIEQLESQNMMPGDATPFEAVKQTQMIGLSPGMTQLKKEIEIVAASDLNVLISGETGTGKELVAKAIHEASPRAVNPLVYLNCAALPESVAESELFGHVKGAFTGAISNRSGKFEMADNGTLFLDEIGELSLALQAKLLRVLQYGDIQRVGDDRSLRVDVRVLAATNRDLREEVLAGRFRADLFHRLSVFPLSVPPLRERGDDVILLAGYFCEQCRLRLGLSRVVLSAGARNLLQHYRFPGNVRELEHAIHRAVVLARATRNGDEVILEAQHFAFPEVTLPPPEAAAVPVVKQNLREATEAFQRETIRQALAQNHHNWAACARMLETDVANLHRLAKRLGMKD.

Asp-57 bears the 4-aspartylphosphate mark. Residues 187 to 416 (MIGLSPGMTQ…LEHAIHRAVV (230 aa)) enclose the Sigma-54 factor interaction domain. Residues 215–222 (GETGTGKE) and 278–287 (ADNGTLFLDE) contribute to the ATP site. The H-T-H motif DNA-binding region spans 479–498 (WAACARMLETDVANLHRLAK).

Its pathway is nitrogen metabolism; nitric oxide reduction. Functionally, required for the expression of anaerobic nitric oxide (NO) reductase, acts as a transcriptional activator for at least the norVW operon. Activation also requires sigma-54. The polypeptide is Anaerobic nitric oxide reductase transcription regulator NorR (Shigella boydii serotype 4 (strain Sb227)).